Consider the following 64-residue polypeptide: Conotoxin Im11.2 (64 aa).

A signal peptide spans 1-26; it reads MMFRLTSVSCFLLVIVCLNLVVLTNA. Cystine bridges form between C27–C41, C34–C46, C40–C50, and C45–C54. D57 is subject to Aspartic acid 1-amide. A propeptide spanning residues 61 to 64 is cleaved from the precursor; the sequence is ATFQ.

It belongs to the conotoxin I2 superfamily. In terms of tissue distribution, expressed by the venom duct.

It localises to the secreted. This chain is Conotoxin Im11.2, found in Conus imperialis (Imperial cone).